The primary structure comprises 502 residues: ATP synthase subunit alpha, chloroplastic (502 aa).

170–177 (GDRQTGKT) is a binding site for ATP.

It belongs to the ATPase alpha/beta chains family. In terms of assembly, F-type ATPases have 2 components, CF(1) - the catalytic core - and CF(0) - the membrane proton channel. CF(1) has five subunits: alpha(3), beta(3), gamma(1), delta(1), epsilon(1). CF(0) has four main subunits: a, b, b' and c.

Its subcellular location is the plastid. The protein resides in the chloroplast thylakoid membrane. The enzyme catalyses ATP + H2O + 4 H(+)(in) = ADP + phosphate + 5 H(+)(out). In terms of biological role, produces ATP from ADP in the presence of a proton gradient across the membrane. The alpha chain is a regulatory subunit. The chain is ATP synthase subunit alpha, chloroplastic from Tupiella akineta (Green alga).